Here is a 326-residue protein sequence, read N- to C-terminus: ELAV-like protein 1 (326 aa).

Ser2 is subject to N-acetylserine. Phosphoserine is present on Ser2. The 79-residue stretch at 20 to 98 (TNLIVNYLPQ…KTIKVSYARP (79 aa)) folds into the RRM 1 domain. Ser100 and Ser158 each carry phosphoserine. Positions 106–186 (ANLYISGLPR…EPITVKFAAN (81 aa)) constitute an RRM 2 domain. Residue Lys191 forms a Glycyl lysine isopeptide (Lys-Gly) (interchain with G-Cter in SUMO2) linkage. A phosphoserine mark is found at Ser197 and Ser202. Position 206 is an omega-N-methylarginine (Arg206). Residue Arg217 is modified to Asymmetric dimethylarginine; by CARM1; alternate. Arg217 is modified (omega-N-methylarginine; alternate). Ser221 and Ser318 each carry phosphoserine. One can recognise an RRM 3 domain in the interval 244 to 322 (WCIFIYNLGQ…KILQVSFKTN (79 aa)).

It belongs to the RRM elav family. Monomer and homodimer (in vitro). Interacts with ANP32A. Interacts with ZNF385A; the interaction is indirect and mRNA-dependent and may regulate p53/TP53 expression. Identified in a mRNP complex, at least composed of DHX9, DDX3X, ELAVL1, HNRNPU, IGF2BP1, ILF3, PABPC1, PCBP2, PTBP2, STAU1, STAU2, SYNCRIP and YBX1. Interacts with AGO1 and AGO2. Interacts with IGF2BP1. Interacts with IGF2BP2 and IGF2BP3. Interacts with HNRNPL. Interacts with DHX36; this interaction occurs in a RNA-dependent manner. Interacts with ILF3; this interaction occurs in a RNA-dependent manner. Interacts with PLEKHN1. Interacts with SHFL; the interaction increases in presence of RNA. Interacts with YBX1; interaction recruits ELAVL1 on C5-methylcytosine (m5C)-containing mRNAs, thereby promoting mRNA stability. Interacts with FXR1. Phosphorylated by MAPKAPK2. Phosphorylated by PRKCD. Post-translationally, methylated at Arg-217 by CARM1 in T-cells in response to LPS challenge.

The protein resides in the cytoplasm. It localises to the nucleus. The protein localises to the stress granule. It is found in the P-body. RNA-binding protein that binds to the 3'-UTR region of mRNAs and increases their stability. Involved in embryonic stem cell (ESC) differentiation: preferentially binds mRNAs that are not methylated by N6-methyladenosine (m6A), stabilizing them, promoting ESC differentiation. Has also been shown to be capable of binding to m6A-containing mRNAs and contributes to MYC stability by binding to m6A-containing MYC mRNAs. Binds to poly-U elements and AU-rich elements (AREs) in the 3'-UTR of target mRNAs. Binds avidly to the AU-rich element in FOS and IL3/interleukin-3 mRNAs. In the case of the FOS AU-rich element, binds to a core element of 27 nucleotides that contain AUUUA, AUUUUA, and AUUUUUA motifs. Binds preferentially to the 5'-UUUU[AG]UUU-3' motif in vitro. With ZNF385A, binds the 3'-UTR of p53/TP53 mRNA to control their nuclear export induced by CDKN2A. Hence, may regulate p53/TP53 expression and mediate in part the CDKN2A anti-proliferative activity. May also bind with ZNF385A the CCNB1 mRNA. Increases the stability of the leptin mRNA harboring an AU-rich element (ARE) in its 3' UTR. The sequence is that of ELAV-like protein 1 (Elavl1) from Mus musculus (Mouse).